The following is a 132-amino-acid chain: MAVSDPIADFLNRIKNGQKARFDKVDIPASRMKASLSRILKEEGYIKNFKLIKDDKQGIIRVQIKYGEHREGAITGIKRVSRPGCRVYVGHDEIPRVMNGMGIGIVSTSKGIMTDRQARKEGIGGELLCSIW.

This sequence belongs to the universal ribosomal protein uS8 family. Part of the 30S ribosomal subunit. Contacts proteins S5 and S12.

In terms of biological role, one of the primary rRNA binding proteins, it binds directly to 16S rRNA central domain where it helps coordinate assembly of the platform of the 30S subunit. In Syntrophobacter fumaroxidans (strain DSM 10017 / MPOB), this protein is Small ribosomal subunit protein uS8.